The sequence spans 162 residues: Inner membrane protein YbjO (162 aa).

The Periplasmic segment spans residues 1-23; it reads MEDETLGFFKKTSSSHARLNVPA. A helical membrane pass occupies residues 24-44; that stretch reads LVQVAALAIIMIRGLDVLMIF. At 45-66 the chain is on the cytoplasmic side; sequence NTLGVRGIGEFIHRSVQTWSLT. Residues 67–87 traverse the membrane as a helical segment; sequence LVFLSSLVLVFIEIWCAFSLV. Residues 88-94 lie on the Periplasmic side of the membrane; sequence KGRRWAR. The helical transmembrane segment at 95–115 threads the bilayer; that stretch reads WLYLLTQITAASYLWAASLGY. Residues 116–162 are Cytoplasmic-facing; that stretch reads GYPELFSIPGESKREIFHSLMLQKLPDMLILMLLFVPSTSRRFFQLQ.

The protein resides in the cell inner membrane. This Escherichia coli O157:H7 protein is Inner membrane protein YbjO (ybjO).